Consider the following 305-residue polypeptide: Tyrosine recombinase XerC (305 aa).

Residues 4-95 form the Core-binding (CB) domain; sequence TSIQALINKW…AVKNFYRFLE (92 aa). The region spanning 116-298 is the Tyr recombinase domain; it reads LLPKALSEDD…SIKHLEAVYT (183 aa). Residues R159, K182, H250, R253, and H276 contribute to the active site. Y285 (O-(3'-phospho-DNA)-tyrosine intermediate) is an active-site residue.

It belongs to the 'phage' integrase family. XerC subfamily. As to quaternary structure, forms a cyclic heterotetrameric complex composed of two molecules of XerC and two molecules of XerD.

It is found in the cytoplasm. Its function is as follows. Site-specific tyrosine recombinase, which acts by catalyzing the cutting and rejoining of the recombining DNA molecules. The XerC-XerD complex is essential to convert dimers of the bacterial chromosome into monomers to permit their segregation at cell division. It also contributes to the segregational stability of plasmids. This is Tyrosine recombinase XerC from Rickettsia africae (strain ESF-5).